The primary structure comprises 204 residues: MEFNEKLQQLRTGKNLTQEQLAEQLYVSRTAISKWESGKGYPNMESLKCISKFFSVTIDELLSGEELITLAETENRSNLKKIYNYIYGILDMMAVAFIFLPLYGNSVGGYVYAVNLLSFTATTPFNLAVYWSAFAALIIIGIGKIISTHLDKEKWGGIATKCSLTITALAVCFFAAAREPYITVLVFLLLIGKIFVWIKQMGMK.

The Cytoplasmic segment spans residues 1-81; sequence MEFNEKLQQL…ETENRSNLKK (81 aa). The HTH cro/C1-type domain occupies 7–61; sequence LQQLRTGKNLTQEQLAEQLYVSRTAISKWESGKGYPNMESLKCISKFFSVTIDEL. Residues 18 to 37 constitute a DNA-binding region (H-T-H motif); the sequence is QEQLAEQLYVSRTAISKWES. A helical transmembrane segment spans residues 82–102; sequence IYNYIYGILDMMAVAFIFLPL. The Extracellular portion of the chain corresponds to 103–126; the sequence is YGNSVGGYVYAVNLLSFTATTPFN. The chain crosses the membrane as a helical span at residues 127–147; it reads LAVYWSAFAALIIIGIGKIIS. Residues 148–154 lie on the Cytoplasmic side of the membrane; sequence THLDKEK. The chain crosses the membrane as a helical span at residues 155 to 175; sequence WGGIATKCSLTITALAVCFFA. Residues 176-181 are Extracellular-facing; it reads AAREPY. Residues 182 to 202 form a helical membrane-spanning segment; that stretch reads ITVLVFLLLIGKIFVWIKQMG. The Cytoplasmic segment spans residues 203–204; it reads MK.

It localises to the cell membrane. Its activity is regulated as follows. Constitutively bound to the bcrABD promoter. Requires bacitracin for activation, probably through a conformational change, such as the oligomerization of inactive dimers to form active tetramers. Its function is as follows. Functions both as a membrane-bound sensor and a transducer of bacitracin availability to activate transcription of the bcrABD operon in the presence of bacitracin. Binds specifically to two inverted repeat sequences on the bcrABD promoter, irrespective of bacitracin concentration. This is HTH-type transcriptional activator BcrR from Enterococcus faecalis (Streptococcus faecalis).